Reading from the N-terminus, the 117-residue chain is Large ribosomal subunit protein uL18 (117 aa).

It belongs to the universal ribosomal protein uL18 family. In terms of assembly, part of the 50S ribosomal subunit; part of the 5S rRNA/L5/L18/L25 subcomplex. Contacts the 5S and 23S rRNAs.

This is one of the proteins that bind and probably mediate the attachment of the 5S RNA into the large ribosomal subunit, where it forms part of the central protuberance. The protein is Large ribosomal subunit protein uL18 of Mannheimia succiniciproducens (strain KCTC 0769BP / MBEL55E).